An 88-amino-acid polypeptide reads, in one-letter code: Large ribosomal subunit protein eL37 (88 aa).

Zn(2+) is bound by residues cysteine 17, cysteine 20, cysteine 32, and cysteine 35. A C4-type zinc finger spans residues 17 to 35 (CNRCGRRSFHVQKKTCSSC).

The protein belongs to the eukaryotic ribosomal protein eL37 family. It depends on Zn(2+) as a cofactor.

Its function is as follows. Binds to the 23S rRNA. In Candida albicans (Yeast), this protein is Large ribosomal subunit protein eL37 (RPL37).